A 122-amino-acid chain; its full sequence is Small ribosomal subunit protein uS13 (122 aa).

The segment at 98–122 (VRGQRTHTNARTRKGPAKAIAGKKK) is disordered.

The protein belongs to the universal ribosomal protein uS13 family. As to quaternary structure, part of the 30S ribosomal subunit. Forms a loose heterodimer with protein S19. Forms two bridges to the 50S subunit in the 70S ribosome.

Located at the top of the head of the 30S subunit, it contacts several helices of the 16S rRNA. In the 70S ribosome it contacts the 23S rRNA (bridge B1a) and protein L5 of the 50S subunit (bridge B1b), connecting the 2 subunits; these bridges are implicated in subunit movement. Contacts the tRNAs in the A and P-sites. This Ruegeria sp. (strain TM1040) (Silicibacter sp.) protein is Small ribosomal subunit protein uS13.